Consider the following 400-residue polypeptide: Serine/threonine transporter SstT (400 aa).

9 consecutive transmembrane segments (helical) span residues 14–34 (IIIA…VTPY), 48–68 (SVAP…FQVG), 76–96 (VLLL…IASL), 136–156 (AISE…GLAM), 177–197 (IIHK…AVTF), 211–231 (LLVV…PILV), 285–305 (IPLG…VLTL), 311–331 (LGIH…TISA), and 349–371 (CSLF…IISV).

The protein belongs to the dicarboxylate/amino acid:cation symporter (DAACS) (TC 2.A.23) family.

The protein localises to the cell inner membrane. The catalysed reaction is L-serine(in) + Na(+)(in) = L-serine(out) + Na(+)(out). The enzyme catalyses L-threonine(in) + Na(+)(in) = L-threonine(out) + Na(+)(out). In terms of biological role, involved in the import of serine and threonine into the cell, with the concomitant import of sodium (symport system). The sequence is that of Serine/threonine transporter SstT from Acinetobacter baumannii (strain AB307-0294).